The following is a 311-amino-acid chain: Ribosomal RNA small subunit methyltransferase H (311 aa).

S-adenosyl-L-methionine is bound by residues 32-34 (AGH), Asp52, Phe79, Asp100, and Gln107. Positions 287–311 (TASQEELEENNRARSAKLRIAEKRK) are disordered. The span at 300 to 311 (RSAKLRIAEKRK) shows a compositional bias: basic residues.

This sequence belongs to the methyltransferase superfamily. RsmH family.

The protein localises to the cytoplasm. The enzyme catalyses cytidine(1402) in 16S rRNA + S-adenosyl-L-methionine = N(4)-methylcytidine(1402) in 16S rRNA + S-adenosyl-L-homocysteine + H(+). Functionally, specifically methylates the N4 position of cytidine in position 1402 (C1402) of 16S rRNA. This Bacillus subtilis (strain 168) protein is Ribosomal RNA small subunit methyltransferase H.